Consider the following 459-residue polypeptide: FBD-associated F-box protein At1g61320 (459 aa).

Residues 1-25 (MAPPTKRTRVEMAESSNKRMKPSET) are disordered. In terms of domain architecture, F-box spans 21-69 (KPSETVPEDVLELMMSTYLPVQSLLTTRVLSKRFRETEVRSLDLDFSGI). The FBD domain occupies 396 to 428 (VKIIGYKGHWHELDIVEFFVKNAPSLKRLELQM).

The polypeptide is FBD-associated F-box protein At1g61320 (Arabidopsis thaliana (Mouse-ear cress)).